A 233-amino-acid chain; its full sequence is Large ribosomal subunit protein uL1 (233 aa).

The protein belongs to the universal ribosomal protein uL1 family. In terms of assembly, part of the 50S ribosomal subunit.

Its function is as follows. Binds directly to 23S rRNA. The L1 stalk is quite mobile in the ribosome, and is involved in E site tRNA release. Protein L1 is also a translational repressor protein, it controls the translation of the L11 operon by binding to its mRNA. The polypeptide is Large ribosomal subunit protein uL1 (Nautilia profundicola (strain ATCC BAA-1463 / DSM 18972 / AmH)).